Reading from the N-terminus, the 414-residue chain is Na(+)/H(+) antiporter NhaA (414 aa).

Transmembrane regions (helical) follow at residues 22–42 (VGGF…NSPF), 61–81 (LHLT…FFVV), 101–121 (MLPI…YAAF), 131–151 (GWGI…AVVG), 171–191 (LGAI…LPLI), 215–235 (SAAL…WALV), 239–259 (GVHA…VPLA), 281–301 (VLPV…LGAV), 308–328 (LGII…GSWV), 343–363 (WIDI…SLLI), and 379–399 (KAGV…VLAV).

It belongs to the NhaA Na(+)/H(+) (TC 2.A.33) antiporter family.

Its subcellular location is the cell membrane. The enzyme catalyses Na(+)(in) + 2 H(+)(out) = Na(+)(out) + 2 H(+)(in). Its function is as follows. Na(+)/H(+) antiporter that extrudes sodium in exchange for external protons. The polypeptide is Na(+)/H(+) antiporter NhaA (Thermobifida fusca (strain YX)).